The sequence spans 154 residues: Ribonuclease H (154 aa).

In terms of domain architecture, RNase H type-1 spans 1–142 (MEKTVEIYTD…VDDLARDAAG (142 aa)). Residues aspartate 10, glutamate 48, aspartate 70, and aspartate 134 each coordinate Mg(2+).

This sequence belongs to the RNase H family. As to quaternary structure, monomer. It depends on Mg(2+) as a cofactor.

The protein localises to the cytoplasm. It catalyses the reaction Endonucleolytic cleavage to 5'-phosphomonoester.. Endonuclease that specifically degrades the RNA of RNA-DNA hybrids. This Pseudoalteromonas translucida (strain TAC 125) protein is Ribonuclease H.